Here is a 755-residue protein sequence, read N- to C-terminus: MEAVIEKECSALGGLFQTIISDMKGSYPVWEDFINKAGKLQSQLRTTVVAAAAFLDAFQKVADMATNTRGGTREIGSALTRMCMRHRSIEAKLRQFSSALIDCLINPLQEQMEEWKKVANQLDKDHAKEYKKARQEIKKKSSDTLKLQKKAKKGRGDIQPQLDSALQDVNDKYLLLEETEKQAVRKALIEERGRFCTFISMLRPVIEEEISMLGEITHLQTISEDLKSLTMDPHKLPSSSEQVILDLKGSDYSWSYQTPPSSPSTTMSRKSSVCSSLNSVNSSDSRSSGSHSHSPSSHYRYRSSNLAQQAPVRLSSVSSHDSGFISQDAFQSKSPSPMPPEAPNQLSNGFSHYSLSSESHVGPTGAGLFPHCLPASRLLPRVTSVHLPDYAHYYTIGPGMFPSSQIPSWKDWAKPGPYDQPLVNTLQRRKEKREPDPNGGGPTTASGPPAAAEEAQRPRSMTVSAATRPGEEMEACEELALALSRGLQLDTQRSSRDSLQCSSGYSTQTTTPCCSEDTIPSQVSDYDYFSVSGDQEADQQEFDKSSTIPRNSDISQSYRRMFQAKRPASTAGLPTTLGPAMVTPGVATIRRTPSTKPSVRRGTIGAGPIPIKTPVIPVKTPTVPDLPGVLPAPPDGPEERGEHSPESPSVGEGPQGVTSMPSSMWSGQASVNPPLPGPKPSIPEEHRQAIPESEAEDQEREPPSATVSPGQIPESDPADLSPRDTPQGEDMLNAIRRGVKLKKTTTNDRSAPRFS.

Positions 1 to 250 constitute an IMD domain; sequence MEAVIEKECS…EQVILDLKGS (250 aa). Residues 108-155 are a coiled coil; sequence LQEQMEEWKKVANQLDKDHAKEYKKARQEIKKKSSDTLKLQKKAKKGR. Disordered stretches follow at residues 139-159 and 255-305; these read KKSSDTLKLQKKAKKGRGDIQ and SYQT…RSSN. The residue at position 258 (T258) is a Phosphothreonine. 4 positions are modified to phosphoserine: S261, S262, S271, and S322. Positions 327 to 351 are disordered; sequence QDAFQSKSPSPMPPEAPNQLSNGFS. The residue at position 425 (T425) is a Phosphothreonine. Disordered stretches follow at residues 428–470, 490–513, and 563–755; these read RRKE…TRPG, DTQRSSRDSLQCSSGYSTQTTTPC, and QAKR…PRFS. The span at 443 to 453 shows a compositional bias: low complexity; that stretch reads TTASGPPAAAE. Residue T603 is modified to Phosphothreonine. Residues 608–623 show a composition bias toward low complexity; the sequence is PIPIKTPVIPVKTPTV. Residues S644 and S647 each carry the phosphoserine modification. A compositionally biased stretch (polar residues) spans 656-671; that stretch reads GVTSMPSSMWSGQASV. Positions 727–744 constitute a WH2 domain; that stretch reads QGEDMLNAIRRGVKLKKT.

Belongs to the MTSS family. In terms of assembly, binds to actin. Binds to the cytoplasmic domain of receptor protein tyrosine phosphatase delta. In terms of tissue distribution, expressed in many tissues, including spleen, thymus, prostate, testis, uterus, colon, and peripheral blood.

The protein localises to the cytoplasm. It is found in the cytoskeleton. In terms of biological role, may be related to cancer progression or tumor metastasis in a variety of organ sites, most likely through an interaction with the actin cytoskeleton. The protein is Protein MTSS 1 of Homo sapiens (Human).